The following is a 321-amino-acid chain: tRNA-dihydrouridine synthase B (321 aa).

FMN-binding positions include 16–18 and Gln70; that span reads PMA. The active-site Proton donor is Cys100. Residues Lys139, 200–202, and 224–225 contribute to the FMN site; these read NGD and GR.

It belongs to the Dus family. DusB subfamily. FMN is required as a cofactor.

The enzyme catalyses a 5,6-dihydrouridine in tRNA + NAD(+) = a uridine in tRNA + NADH + H(+). The catalysed reaction is a 5,6-dihydrouridine in tRNA + NADP(+) = a uridine in tRNA + NADPH + H(+). Its function is as follows. Catalyzes the synthesis of 5,6-dihydrouridine (D), a modified base found in the D-loop of most tRNAs, via the reduction of the C5-C6 double bond in target uridines. In Escherichia coli O157:H7, this protein is tRNA-dihydrouridine synthase B.